The following is a 378-amino-acid chain: MGAAVTLNRIKIAPGIADIRDKYMELGFNYPEYNRAVKFAEESYTYYYETSPGEIKPKFCLIDGMSIDHCSSFIVPEFAKQYVLIHGEPCSSFKFRPGSLIYYQNEVTPEYIKDLKHATDYIASGQRCHFIKKDYLLGDSDSVAKCCSKTNTKHCPKIFNNNYKTEHCDDFMTGFCRNDPGNPNCLEWLRAKRKPAMSTYSDICSKHMDARYCSEFIRIIRPDYFTFGDTALYVFCNDHKGNRNCWCANYPKSNSGDKYLGPRVCWLHECTDESRDRKWLYYNQDVQRTRCKYVGCTINVNSLALKNSQAELTSNCTRTTSAVGDVHHPGEPVVKDKIKLPTWLGAAITLVVISVIFYFISIYSRPKIKTNDINVRRR.

Glycine 2 carries N-myristoyl glycine; by host lipidation. At 2–342 (GAAVTLNRIK…VVKDKIKLPT (341 aa)) the chain is on the virion surface side. Residues 343–363 (WLGAAITLVVISVIFYFISIY) traverse the membrane as a helical; Signal-anchor for type II membrane protein segment. The Intravirion portion of the chain corresponds to 364–378 (SRPKIKTNDINVRRR).

It belongs to the poxviridae A16/G9/J5 family. In terms of assembly, part of a stable entry-fusion complex (EFC) which is at least composed of proteins A16, A21, A28, G3, G9, H2, J5, and L5. Formation of the viral membrane is necessary for the assembly of the complex. Interacts with G9. In terms of processing, most cysteines are linked by disulfide bonds. They are created by the viral disulfide bond formation pathway, a poxvirus-specific redox pathway that operates on the cytoplasmic side of the MV membranes.

The protein localises to the virion membrane. Envelope protein part of the entry-fusion complex responsible for the virus membrane fusion with host cell membrane during virus entry. Also plays a role in cell-cell fusion (syncytium formation). The polypeptide is Virion membrane protein A16 (Oryctolagus cuniculus (Rabbit)).